We begin with the raw amino-acid sequence, 38 residues long: Alpha-2-macroglobulin homolog (38 aa).

The isoglutamyl cysteine thioester (Cys-Gln) cross-link spans 27-30 (CGEQ).

This sequence belongs to the protease inhibitor I39 (alpha-2-macroglobulin) family. Homodimer; disulfide-linked. In terms of tissue distribution, hemolymph.

It localises to the secreted. In terms of biological role, is able to inhibit all four classes of proteinases by a unique 'trapping' mechanism. This protein has a peptide stretch, called the 'bait region' which contains specific cleavage sites for different proteinases. When a proteinase cleaves the bait region, a conformational change is induced in the protein which traps the proteinase. The entrapped enzyme remains active against low molecular weight substrates (activity against high molecular weight substrates is greatly reduced). Following cleavage in the bait region a thioester bond is hydrolyzed and mediates the covalent binding of the protein to the proteinase. In Homarus americanus (American lobster), this protein is Alpha-2-macroglobulin homolog.